The chain runs to 116 residues: U16-barytoxin-Tl1f (116 aa).

The first 20 residues, 1–20 (MKTIIVFLSLLVLATKFGDA), serve as a signal peptide directing secretion. Positions 21–74 (NEGVNQEQMKEVIQNEFREDFLNEMAPMSLLQQLEAIESTLLEKEADRNSRQKR) are excised as a propeptide. 3 disulfides stabilise this stretch: cysteine 75-cysteine 90, cysteine 82-cysteine 95, and cysteine 89-cysteine 110. An N-linked (GlcNAc...) asparagine glycan is attached at asparagine 85.

This sequence belongs to the neurotoxin 14 (magi-1) family. 06 (ICK-Trit) subfamily. As to expression, expressed by the venom gland.

Its subcellular location is the secreted. Functionally, ion channel inhibitor. The sequence is that of U16-barytoxin-Tl1f from Trittame loki (Brush-footed trapdoor spider).